Reading from the N-terminus, the 299-residue chain is Apolipoprotein E (299 aa).

Positions 1–18 are cleaved as a signal peptide; that stretch reads MKVLCTVLVVTLLAGCRA. A run of 7 repeats spans residues 74-95, 96-117, 118-139, 140-161, 162-183, 184-205, and 224-245. Residues 74–245 form an 8 X 22 AA approximate tandem repeats region; that stretch reads VLMEDTMKAV…RLEEMREQME (172 aa). Met-137 is modified (methionine sulfoxide). Ser-141 carries the phosphoserine modification. The tract at residues 152–162 is LDL and other lipoprotein receptors binding; the sequence is HLRKLRKRMLR. 156–159 lines the heparin pocket; sequence LRKR. The tract at residues 204–273 is lipid-binding and lipoprotein association; that stretch reads AALTGQPLQE…GWFEPMVEDM (70 aa). 219-226 is a binding site for heparin; the sequence is GKQLRGRL. The interval 261–273 is specificity for association with VLDL; that stretch reads RLKGWFEPMVEDM.

Belongs to the apolipoprotein A1/A4/E family. In terms of assembly, homotetramer. May interact with ABCA1; functionally associated with ABCA1 in the biogenesis of HDLs. May interact with APP/A4 amyloid-beta peptide; the interaction is extremely stable in vitro but its physiological significance is unclear. May interact with MAPT. May interact with MAP2. In the cerebrospinal fluid, interacts with secreted SORL1. Interacts with PMEL; this allows the loading of PMEL luminal fragment on ILVs to induce fibril nucleation. In terms of processing, APOE exists as multiple glycosylated and sialylated glycoforms within cells and in plasma. The extent of glycosylation and sialylation are tissue and context specific. Glycated in plasma VLDL. Post-translationally, phosphorylated by FAM20C in the extracellular medium.

Its subcellular location is the secreted. The protein localises to the extracellular space. It is found in the extracellular matrix. It localises to the extracellular vesicle. The protein resides in the endosome. Its subcellular location is the multivesicular body. In terms of biological role, APOE is an apolipoprotein, a protein associating with lipid particles, that mainly functions in lipoprotein-mediated lipid transport between organs via the plasma and interstitial fluids. APOE is a core component of plasma lipoproteins and is involved in their production, conversion and clearance. Apolipoproteins are amphipathic molecules that interact both with lipids of the lipoprotein particle core and the aqueous environment of the plasma. As such, APOE associates with chylomicrons, chylomicron remnants, very low density lipoproteins (VLDL) and intermediate density lipoproteins (IDL) but shows a preferential binding to high-density lipoproteins (HDL). It also binds a wide range of cellular receptors including the LDL receptor/LDLR, the LDL receptor-related proteins LRP1, LRP2 and LRP8 and the very low-density lipoprotein receptor/VLDLR that mediate the cellular uptake of the APOE-containing lipoprotein particles. Finally, APOE also has a heparin-binding activity and binds heparan-sulfate proteoglycans on the surface of cells, a property that supports the capture and the receptor-mediated uptake of APOE-containing lipoproteins by cells. A main function of APOE is to mediate lipoprotein clearance through the uptake of chylomicrons, VLDLs, and HDLs by hepatocytes. APOE is also involved in the biosynthesis by the liver of VLDLs as well as their uptake by peripheral tissues ensuring the delivery of triglycerides and energy storage in muscle, heart and adipose tissues. By participating in the lipoprotein-mediated distribution of lipids among tissues, APOE plays a critical role in plasma and tissues lipid homeostasis. APOE is also involved in two steps of reverse cholesterol transport, the HDLs-mediated transport of cholesterol from peripheral tissues to the liver, and thereby plays an important role in cholesterol homeostasis. First, it is functionally associated with ABCA1 in the biogenesis of HDLs in tissues. Second, it is enriched in circulating HDLs and mediates their uptake by hepatocytes. APOE also plays an important role in lipid transport in the central nervous system, regulating neuron survival and sprouting. The polypeptide is Apolipoprotein E (APOE) (Octodon degus (Degu)).